Consider the following 183-residue polypeptide: Inosine/xanthosine triphosphatase (183 aa).

The protein belongs to the YjjX NTPase family. In terms of assembly, homodimer. It depends on Mg(2+) as a cofactor. Mn(2+) serves as cofactor.

The enzyme catalyses XTP + H2O = XDP + phosphate + H(+). It carries out the reaction ITP + H2O = IDP + phosphate + H(+). Phosphatase that hydrolyzes non-canonical purine nucleotides such as XTP and ITP to their respective diphosphate derivatives. Probably excludes non-canonical purines from DNA/RNA precursor pool, thus preventing their incorporation into DNA/RNA and avoiding chromosomal lesions. This Vibrio cholerae serotype O1 (strain ATCC 39315 / El Tor Inaba N16961) protein is Inosine/xanthosine triphosphatase.